The sequence spans 128 residues: Large ribosomal subunit protein bL12 (128 aa).

Belongs to the bacterial ribosomal protein bL12 family. Homodimer. Part of the ribosomal stalk of the 50S ribosomal subunit. Forms a multimeric L10(L12)X complex, where L10 forms an elongated spine to which 2 to 4 L12 dimers bind in a sequential fashion. Binds GTP-bound translation factors.

Its function is as follows. Forms part of the ribosomal stalk which helps the ribosome interact with GTP-bound translation factors. Is thus essential for accurate translation. The protein is Large ribosomal subunit protein bL12 of Thermosipho africanus (strain TCF52B).